Reading from the N-terminus, the 431-residue chain is Citrate synthase 1 (431 aa).

Residues histidine 309 and aspartate 366 contribute to the active site.

Belongs to the citrate synthase family. Homohexamer.

The catalysed reaction is oxaloacetate + acetyl-CoA + H2O = citrate + CoA + H(+). It functions in the pathway carbohydrate metabolism; tricarboxylic acid cycle; isocitrate from oxaloacetate: step 1/2. The chain is Citrate synthase 1 (gltA2) from Mycobacterium tuberculosis (strain CDC 1551 / Oshkosh).